The sequence spans 172 residues: Adenine phosphoribosyltransferase (172 aa).

This sequence belongs to the purine/pyrimidine phosphoribosyltransferase family. In terms of assembly, homodimer.

It is found in the cytoplasm. It carries out the reaction AMP + diphosphate = 5-phospho-alpha-D-ribose 1-diphosphate + adenine. It participates in purine metabolism; AMP biosynthesis via salvage pathway; AMP from adenine: step 1/1. Catalyzes a salvage reaction resulting in the formation of AMP, that is energically less costly than de novo synthesis. This chain is Adenine phosphoribosyltransferase, found in Methanococcus maripaludis (strain C5 / ATCC BAA-1333).